The chain runs to 419 residues: Hyaluronan synthase (419 aa).

Helical transmembrane passes span 8–28 (LIVL…MYLF), 33–53 (VGIY…LSFL), 318–338 (IVAL…VAIG), 345–365 (AIQL…IVAL), and 376–396 (PASF…LQPL).

Belongs to the NodC/HAS family. It depends on Mg(2+) as a cofactor.

It is found in the cell membrane. The catalysed reaction is [hyaluronan](n) + UDP-N-acetyl-alpha-D-glucosamine = N-acetyl-beta-D-glucosaminyl-(1-&gt;4)-[hyaluronan](n) + UDP + H(+). The enzyme catalyses N-acetyl-beta-D-glucosaminyl-(1-&gt;4)-[hyaluronan](n) + UDP-alpha-D-glucuronate = [hyaluronan](n+1) + UDP + H(+). It functions in the pathway glycan biosynthesis; hyaluronan biosynthesis. Its function is as follows. Glycosaminoglycan synthesis. The hyaluronic acid capsule is involved in the pathogenicity of group A Streptococci; it may be the major virulence determinant. This Streptococcus pyogenes serotype M18 (strain MGAS8232) protein is Hyaluronan synthase (hasA).